Here is a 554-residue protein sequence, read N- to C-terminus: CTP synthase (554 aa).

The amidoligase domain stretch occupies residues 1–265 (MTPLIFVTGG…DELVIDQFKL (265 aa)). Serine 13 contacts CTP. Position 13 (serine 13) interacts with UTP. ATP-binding positions include 14–19 (SLGKGI) and aspartate 71. Mg(2+)-binding residues include aspartate 71 and glutamate 139. Residues 146–148 (DIE), 186–191 (KTKPTQ), and lysine 222 each bind CTP. UTP is bound by residues 186 to 191 (KTKPTQ) and lysine 222. The region spanning 292-545 (NIAVVGKYVD…VRAAREKKAG (254 aa)) is the Glutamine amidotransferase type-1 domain. Glycine 353 contacts L-glutamine. Catalysis depends on cysteine 380, which acts as the Nucleophile; for glutamine hydrolysis. Residues 381–384 (YGMQ), glutamate 404, and arginine 471 each bind L-glutamine. Catalysis depends on residues histidine 518 and glutamate 520.

This sequence belongs to the CTP synthase family. Homotetramer.

The catalysed reaction is UTP + L-glutamine + ATP + H2O = CTP + L-glutamate + ADP + phosphate + 2 H(+). It catalyses the reaction L-glutamine + H2O = L-glutamate + NH4(+). The enzyme catalyses UTP + NH4(+) + ATP = CTP + ADP + phosphate + 2 H(+). Its pathway is pyrimidine metabolism; CTP biosynthesis via de novo pathway; CTP from UDP: step 2/2. With respect to regulation, allosterically activated by GTP, when glutamine is the substrate; GTP has no effect on the reaction when ammonia is the substrate. The allosteric effector GTP functions by stabilizing the protein conformation that binds the tetrahedral intermediate(s) formed during glutamine hydrolysis. Inhibited by the product CTP, via allosteric rather than competitive inhibition. Its function is as follows. Catalyzes the ATP-dependent amination of UTP to CTP with either L-glutamine or ammonia as the source of nitrogen. Regulates intracellular CTP levels through interactions with the four ribonucleotide triphosphates. The protein is CTP synthase of Xanthomonas axonopodis pv. citri (strain 306).